The sequence spans 270 residues: Putative phosphoenolpyruvate synthase regulatory protein (270 aa).

Residue 150 to 157 (GVSRSGKT) coordinates ADP.

It belongs to the pyruvate, phosphate/water dikinase regulatory protein family. PSRP subfamily.

The catalysed reaction is [pyruvate, water dikinase] + ADP = [pyruvate, water dikinase]-phosphate + AMP + H(+). It carries out the reaction [pyruvate, water dikinase]-phosphate + phosphate + H(+) = [pyruvate, water dikinase] + diphosphate. Its function is as follows. Bifunctional serine/threonine kinase and phosphorylase involved in the regulation of the phosphoenolpyruvate synthase (PEPS) by catalyzing its phosphorylation/dephosphorylation. The sequence is that of Putative phosphoenolpyruvate synthase regulatory protein from Cupriavidus metallidurans (strain ATCC 43123 / DSM 2839 / NBRC 102507 / CH34) (Ralstonia metallidurans).